We begin with the raw amino-acid sequence, 328 residues long: Beta-ketoacyl-[acyl-carrier-protein] synthase III (328 aa).

Active-site residues include Cys-114 and His-253. Residues 254-258 (QANIR) are ACP-binding. Asn-283 is a catalytic residue.

The protein belongs to the thiolase-like superfamily. FabH family. Homodimer.

It is found in the cytoplasm. The enzyme catalyses malonyl-[ACP] + acetyl-CoA + H(+) = 3-oxobutanoyl-[ACP] + CO2 + CoA. It participates in lipid metabolism; fatty acid biosynthesis. Catalyzes the condensation reaction of fatty acid synthesis by the addition to an acyl acceptor of two carbons from malonyl-ACP. Catalyzes the first condensation reaction which initiates fatty acid synthesis and may therefore play a role in governing the total rate of fatty acid production. Possesses both acetoacetyl-ACP synthase and acetyl transacylase activities. Its substrate specificity determines the biosynthesis of branched-chain and/or straight-chain of fatty acids. This chain is Beta-ketoacyl-[acyl-carrier-protein] synthase III, found in Clostridioides difficile (strain 630) (Peptoclostridium difficile).